A 68-amino-acid chain; its full sequence is Large ribosomal subunit protein bL32 (68 aa).

Residues 1 to 25 (MAVPQNKITKSRRGQRRSHDALVAG) are disordered.

Belongs to the bacterial ribosomal protein bL32 family.

The sequence is that of Large ribosomal subunit protein bL32 from Dinoroseobacter shibae (strain DSM 16493 / NCIMB 14021 / DFL 12).